The following is a 320-amino-acid chain: Ribosomal RNA small subunit methyltransferase H (320 aa).

Residues 42-44 (GGH), D62, F86, D108, and Q115 each bind S-adenosyl-L-methionine.

This sequence belongs to the methyltransferase superfamily. RsmH family.

The protein resides in the cytoplasm. The enzyme catalyses cytidine(1402) in 16S rRNA + S-adenosyl-L-methionine = N(4)-methylcytidine(1402) in 16S rRNA + S-adenosyl-L-homocysteine + H(+). Its function is as follows. Specifically methylates the N4 position of cytidine in position 1402 (C1402) of 16S rRNA. The chain is Ribosomal RNA small subunit methyltransferase H from Yersinia enterocolitica serotype O:8 / biotype 1B (strain NCTC 13174 / 8081).